The sequence spans 509 residues: 2,3-bisphosphoglycerate-independent phosphoglycerate mutase (509 aa).

D11 provides a ligand contact to Mn(2+). Y35 is modified (phosphotyrosine). S61 provides a ligand contact to Mn(2+). Residue S61 is the Phosphoserine intermediate of the active site. Substrate-binding positions include H122, 152 to 153, R184, R190, 260 to 263, and K335; these read RD and RPDR. Mn(2+) contacts are provided by D402, H406, D443, H444, and H461.

It belongs to the BPG-independent phosphoglycerate mutase family. Monomer. Mn(2+) is required as a cofactor.

It catalyses the reaction (2R)-2-phosphoglycerate = (2R)-3-phosphoglycerate. It functions in the pathway carbohydrate degradation; glycolysis; pyruvate from D-glyceraldehyde 3-phosphate: step 3/5. Essential for rapid growth and for sporulation. Catalyzes the interconversion of 2-phosphoglycerate and 3-phosphoglycerate. The sequence is that of 2,3-bisphosphoglycerate-independent phosphoglycerate mutase from Bacillus cereus (strain ATCC 10987 / NRS 248).